Consider the following 276-residue polypeptide: uncharacterized protein (276 aa).

This sequence to E.coli YjfZ.

This is an uncharacterized protein from Escherichia coli (strain K12).